We begin with the raw amino-acid sequence, 441 residues long: Glutamyl-tRNA reductase (441 aa).

Substrate contacts are provided by residues 49 to 52 (TCNR), Ser109, 114 to 116 (EDQ), and Gln120. Cys50 functions as the Nucleophile in the catalytic mechanism. Residue 190-195 (GAGKMS) participates in NADP(+) binding.

Belongs to the glutamyl-tRNA reductase family. In terms of assembly, homodimer.

It carries out the reaction (S)-4-amino-5-oxopentanoate + tRNA(Glu) + NADP(+) = L-glutamyl-tRNA(Glu) + NADPH + H(+). It participates in porphyrin-containing compound metabolism; protoporphyrin-IX biosynthesis; 5-aminolevulinate from L-glutamyl-tRNA(Glu): step 1/2. Catalyzes the NADPH-dependent reduction of glutamyl-tRNA(Glu) to glutamate 1-semialdehyde (GSA). The sequence is that of Glutamyl-tRNA reductase from Moorella thermoacetica (strain ATCC 39073 / JCM 9320).